We begin with the raw amino-acid sequence, 668 residues long: Probable metal-nicotianamine transporter YSL5 (668 aa).

The segment covering 1–11 (MPPPETSSAAA) has biased composition (low complexity). Positions 1-22 (MPPPETSSAAAPSPPSPDPLPP) are disordered. Positions 12–22 (PSPPSPDPLPP) are enriched in pro residues. 14 helical membrane passes run 27-47 (LTLRGVAVAAVLGSLLCVVIH), 51-71 (LTVGVIPALNVASGLLAFFLA), 102-122 (CAIACGSLAFSGCSSSYIFAM), 147-167 (LGWMIGFMFLIALIGPFSIVM), 209-229 (LVKYMSLSFGWSFFKWFFSGV), 268-288 (IVNCSVFLGSVISWGFLWPFI), 315-335 (IAISVILGDGLYNLVKVFLII), 383-403 (LAVSGYIVLAAISTVAVPIIF), 410-430 (LVLVCYFLAPAIAFCNSYGMG), 443-463 (IALFVFASLVGSDGGVIAGLA), 501-521 (IGVALGCIIAPLTLWLFWTAF), 557-577 (LEICCVFFLAALIINLMKDVV), 595-615 (FYIGAYFGVDMFIGTLILFAW), and 633-653 (GLICGDGVWSIPSAVLSILGV).

Belongs to the YSL (TC 2.A.67.2) family. As to expression, expressed in roots.

Its subcellular location is the membrane. May be involved in the transport of nicotianamine-chelated metals. In Oryza sativa subsp. japonica (Rice), this protein is Probable metal-nicotianamine transporter YSL5 (YSL5).